The primary structure comprises 145 residues: Large ribosomal subunit protein uL13 (145 aa).

Belongs to the universal ribosomal protein uL13 family. Part of the 50S ribosomal subunit.

In terms of biological role, this protein is one of the early assembly proteins of the 50S ribosomal subunit, although it is not seen to bind rRNA by itself. It is important during the early stages of 50S assembly. The protein is Large ribosomal subunit protein uL13 of Bacillus pumilus (strain SAFR-032).